Reading from the N-terminus, the 468-residue chain is Tapasin-related protein (468 aa).

An N-terminal signal peptide occupies residues 1–18; that stretch reads MGTQEGWCLLLCLALSGA. The Lumenal portion of the chain corresponds to 19-405; it reads AETKPHPAEG…STQVVPPERR (387 aa). Positions 181 to 297 constitute an Ig-like V-type domain; the sequence is PQGTVRTAVE…SLYRAQQIIQ (117 aa). Intrachain disulfides connect cysteine 212-cysteine 283 and cysteine 321-cysteine 382. The 91-residue stretch at 304 to 394 folds into the Ig-like C1-type domain; that stretch reads PKVRLSLANE…THISLEEPLG (91 aa). Residues 406 to 426 traverse the membrane as a helical segment; it reads TALGVIFASSLFLLALMFLGL. Residues 427–468 are Cytoplasmic-facing; the sequence is QRRQAPTGLGLLQAERWETTSCADTQSSHLHEDRTARVSQPS. The segment at 449-468 is disordered; that stretch reads ADTQSSHLHEDRTARVSQPS.

As to quaternary structure, interacts with peptide-free HLA-A*02-B2M complexes or those loaded with low affinity peptides, likely facilitating peptide exchange onto higher affinity peptides. Interacts with MR1 in a ligand-independent way; this interaction may stabilize MR1 pool and facilitate ligand loading and dissociation.

The protein localises to the cell membrane. Its subcellular location is the endoplasmic reticulum membrane. It is found in the microsome membrane. The protein resides in the golgi apparatus membrane. Component of the antigen processing and presentation pathway, which binds to MHC class I coupled with beta2-microglobulin/B2M. Association between TAPBPR and MHC class I occurs in the absence of a functional peptide-loading complex (PLC). This is Tapasin-related protein (TAPBPL) from Homo sapiens (Human).